Consider the following 187-residue polypeptide: ATP synthase subunit delta, chloroplastic (187 aa).

It belongs to the ATPase delta chain family. F-type ATPases have 2 components, F(1) - the catalytic core - and F(0) - the membrane proton channel. F(1) has five subunits: alpha(3), beta(3), gamma(1), delta(1), epsilon(1). CF(0) has four main subunits: a(1), b(1), b'(1) and c(10-14). The alpha and beta chains form an alternating ring which encloses part of the gamma chain. F(1) is attached to F(0) by a central stalk formed by the gamma and epsilon chains, while a peripheral stalk is formed by the delta, b and b' chains.

The protein localises to the plastid. The protein resides in the chloroplast thylakoid membrane. Its function is as follows. F(1)F(0) ATP synthase produces ATP from ADP in the presence of a proton or sodium gradient. F-type ATPases consist of two structural domains, F(1) containing the extramembraneous catalytic core and F(0) containing the membrane proton channel, linked together by a central stalk and a peripheral stalk. During catalysis, ATP synthesis in the catalytic domain of F(1) is coupled via a rotary mechanism of the central stalk subunits to proton translocation. This protein is part of the stalk that links CF(0) to CF(1). It either transmits conformational changes from CF(0) to CF(1) or is implicated in proton conduction. The polypeptide is ATP synthase subunit delta, chloroplastic (Trieres chinensis (Marine centric diatom)).